The primary structure comprises 235 residues: Glycerol-3-phosphate acyltransferase (235 aa).

6 helical membrane passes run 4–24 (LLAILTVSYIIGSIPTSIMAG), 56–76 (TVTLIDIVKGVVAAVSVVAFF), 94–114 (LLAGMSAVIGHVFTVFAGFKG), 126–146 (IGIAPVSMLMVIGIFLLTVWF), 152–172 (VASIFAAVAFPLIIAIRKYVF), and 194–214 (SLDYHLIIFGLLVAFAILFTH).

Belongs to the PlsY family. In terms of assembly, probably interacts with PlsX.

The protein localises to the cell inner membrane. The catalysed reaction is an acyl phosphate + sn-glycerol 3-phosphate = a 1-acyl-sn-glycero-3-phosphate + phosphate. It participates in lipid metabolism; phospholipid metabolism. Functionally, catalyzes the transfer of an acyl group from acyl-phosphate (acyl-PO(4)) to glycerol-3-phosphate (G3P) to form lysophosphatidic acid (LPA). This enzyme utilizes acyl-phosphate as fatty acyl donor, but not acyl-CoA or acyl-ACP. The sequence is that of Glycerol-3-phosphate acyltransferase from Chlorobium phaeovibrioides (strain DSM 265 / 1930) (Prosthecochloris vibrioformis (strain DSM 265)).